A 198-amino-acid chain; its full sequence is Probable GTP-binding protein EngB (198 aa).

The 174-residue stretch at 22-195 (DLPEIALAGR…WKAIHKFTKT (174 aa)) folds into the EngB-type G domain. Residues 30–37 (GRSNVGKS), 57–61 (GKTQT), 75–78 (DVPG), 142–145 (TKAD), and 174–176 (FSS) each bind GTP. Residues Ser-37 and Thr-59 each coordinate Mg(2+).

This sequence belongs to the TRAFAC class TrmE-Era-EngA-EngB-Septin-like GTPase superfamily. EngB GTPase family. Mg(2+) serves as cofactor.

Functionally, necessary for normal cell division and for the maintenance of normal septation. The polypeptide is Probable GTP-binding protein EngB (Bacillus cytotoxicus (strain DSM 22905 / CIP 110041 / 391-98 / NVH 391-98)).